Here is a 590-residue protein sequence, read N- to C-terminus: Multidrug resistance ABC transporter ATP-binding and permease protein (590 aa).

Helical transmembrane passes span 35 to 55 (YLFF…QLQV), 79 to 99 (IALY…LGIF), 150 to 170 (IPQA…MLQM), 176 to 196 (LAMI…MTFG), 261 to 281 (VMML…IYLI), and 292 to 312 (LGMM…ATFF). The 280-residue stretch at 38-317 (FIIGILAGIV…VATFFTELAK (280 aa)) folds into the ABC transmembrane type-1 domain. Positions 349–584 (LSARHVDFAY…HPLYAKYVSE (236 aa)) constitute an ABC transporter domain. 382–389 (GPSGGGKS) contributes to the ATP binding site.

This sequence belongs to the ABC transporter superfamily. Multidrug exporter LmrA (TC 3.A.1.117.1) family. As to quaternary structure, homodimer.

It is found in the cell membrane. The catalysed reaction is ATP + H2O + xenobioticSide 1 = ADP + phosphate + xenobioticSide 2.. In terms of biological role, efflux transporter for a variety of amphiphilic cationic compounds, including antibiotics. The chain is Multidrug resistance ABC transporter ATP-binding and permease protein (lmrA) from Lactococcus lactis subsp. lactis (strain IL1403) (Streptococcus lactis).